The chain runs to 631 residues: UvrABC system protein C (631 aa).

Residues 1–20 form a disordered region; it reads MKNETEAVADQPPKTGPVKP. The 79-residue stretch at 34–112 folds into the GIY-YIG domain; the sequence is MSPGVYRMLD…IKQLKPKFNV (79 aa). In terms of domain architecture, UVR spans 222–257; that stretch reads TDLQRQLADGMAAASEAMEFERAAALRDRIRALTNV.

The protein belongs to the UvrC family. As to quaternary structure, interacts with UvrB in an incision complex.

It is found in the cytoplasm. Functionally, the UvrABC repair system catalyzes the recognition and processing of DNA lesions. UvrC both incises the 5' and 3' sides of the lesion. The N-terminal half is responsible for the 3' incision and the C-terminal half is responsible for the 5' incision. This is UvrABC system protein C from Jannaschia sp. (strain CCS1).